The chain runs to 295 residues: MTFKSGFVTIIGRPNVGKSTLMNKIIGEKIAIMSDKPQTTRNKIQCVYTQKDYQIVFLDTPGIHKPKHKLGQYMVKIATETLKEVDAVLFVVDEGNSIGPGDQYIIDQLQGIDTPIILVLNKIDKMNAENLNHLYDQYEKTGIFKHIIGISALEGANVGNLINLIVQYLPEGPKYFPEHMITDQPERLIVAELIREKILHYTDQEIPHGVAVETSLMKRREGKDIIDINATIYCEKKSHKGIIIGKGGRKLKGIGKSAREDIEKLLGSKVYLELWVKVKEDWRNSENTLRTLGYD.

The Era-type G domain occupies 4–171; the sequence is KSGFVTIIGR…INLIVQYLPE (168 aa). Residues 12–19 are G1; it reads GRPNVGKS. Residue 12–19 coordinates GTP; that stretch reads GRPNVGKS. Positions 38–42 are G2; it reads QTTRN. A G3 region spans residues 59-62; the sequence is DTPG. GTP contacts are provided by residues 59-63 and 121-124; these read DTPGI and NKID. The tract at residues 121-124 is G4; that stretch reads NKID. Residues 150–152 are G5; that stretch reads ISA. Residues 194 to 280 form the KH type-2 domain; sequence IREKILHYTD…YLELWVKVKE (87 aa).

The protein belongs to the TRAFAC class TrmE-Era-EngA-EngB-Septin-like GTPase superfamily. Era GTPase family. As to quaternary structure, monomer.

It localises to the cytoplasm. It is found in the cell membrane. Its function is as follows. An essential GTPase that binds both GDP and GTP, with rapid nucleotide exchange. Plays a role in 16S rRNA processing and 30S ribosomal subunit biogenesis and possibly also in cell cycle regulation and energy metabolism. The protein is GTPase Era of Alkaliphilus oremlandii (strain OhILAs) (Clostridium oremlandii (strain OhILAs)).